Here is a 200-residue protein sequence, read N- to C-terminus: MTIAKELKQKSNEELVKLVIKLKGELLEYRFKLAHGELDKPHLIAKVRKLLAVVLTILTERKLNWQVEKDKYKLLSRKTNELIVNSWKQKLSTKPESKQETKKAEVKPKVESKPESKQETKKAEVKPLKQETKKVEVKPKVEPKPLKQETKKVEARIETKTKVESKPLKQEVKKVEAKKSVSKPQKPVKAKMIKTKEKKQ.

Positions 1–107 (MTIAKELKQK…KQETKKAEVK (107 aa)) are large ribosomal subunit protein uL29. A disordered region spans residues 92–200 (STKPESKQET…KMIKTKEKKQ (109 aa)). Positions 93–179 (TKPESKQETK…QEVKKVEAKK (87 aa)) are enriched in basic and acidic residues. Residues 108–200 (PKVESKPESK…KMIKTKEKKQ (93 aa)) are unknown. The segment covering 186–200 (KPVKAKMIKTKEKKQ) has biased composition (basic residues).

It belongs to the universal ribosomal protein uL29 family.

The sequence is that of Large ribosomal subunit protein uL29 from Mycoplasma genitalium (strain ATCC 33530 / DSM 19775 / NCTC 10195 / G37) (Mycoplasmoides genitalium).